Consider the following 762-residue polypeptide: ABC-type oligopeptide transporter ABCB9 (762 aa).

8 consecutive transmembrane segments (helical) span residues 7–27, 47–67, 84–104, 116–136, 181–201, 221–241, 315–335, and 412–432; these read VVVTLAFVSTDVGVTTAIYAF, VLDLWAACLYRSCLLLGATIG, LVITLVCLFVGIYAMAKLLLF, FWALFVWTYISLAASFLLWGL, VAFLVAASFFLIVAALGETFL, FTTAVVVVCLLAIGSSLAAGI, VFMFSLSWQLSLVTFMGFPII, and SGLTLLVVQVSILYYGGHLVI. In terms of domain architecture, ABC transmembrane type-1 spans 184-467; sequence LVAASFFLIV…VGSVYSGLMQ (284 aa). Residues 500–736 enclose the ABC transporter domain; it reads VDFENVTFTY…GGLYAKLVQR (237 aa). Residue 535–542 participates in ATP binding; the sequence is GPSGSGKS.

It belongs to the ABC transporter superfamily. ABCB family. MHC peptide exporter (TC 3.A.1.209) subfamily. Homodimer. Interacts (via TMD0 region) with LAMP1; this interaction strongly stabilizes ABCB9 and protects ABCB9 against lysosomal degradation. Interacts (via TMD0 region) with LAMP2 (isoform LAMP-2B). Interacts (via TMD0) with YIF1B; this interaction allows (but is not essential) the ER-to-Golgi trafficking and strongly depends on a salt bridge within TMD0. As to expression, highly expressed in testis, particularly in the Sertoli cells of the seminiferous tubules, and at moderate levels in brain and spinal cord.

Its subcellular location is the lysosome membrane. It carries out the reaction a [oligopeptide](in) + ATP + H2O = a [oligopeptide](out) + ADP + phosphate + H(+). In terms of biological role, ATP-dependent low-affinity peptide transporter which translocates a broad spectrum of peptides from the cytosol to the lysosomal lumen for degradation. Displays a broad peptide length specificity from 6-mer up to at least 59-mer peptides with an optimum of 23-mers. Binds and transports smaller and larger peptides with the same affinity. Favors positively charged, aromatic or hydrophobic residues in the N- and C-terminal positions whereas negatively charged residues as well as asparagine and methionine are not favored. The sequence is that of ABC-type oligopeptide transporter ABCB9 from Mus musculus (Mouse).